Here is a 393-residue protein sequence, read N- to C-terminus: NADH-quinone oxidoreductase subunit D (393 aa).

The protein belongs to the complex I 49 kDa subunit family. As to quaternary structure, NDH-1 is composed of 14 different subunits. Subunits NuoB, C, D, E, F, and G constitute the peripheral sector of the complex.

The protein resides in the cell inner membrane. It catalyses the reaction a quinone + NADH + 5 H(+)(in) = a quinol + NAD(+) + 4 H(+)(out). NDH-1 shuttles electrons from NADH, via FMN and iron-sulfur (Fe-S) centers, to quinones in the respiratory chain. The immediate electron acceptor for the enzyme in this species is believed to be ubiquinone. Couples the redox reaction to proton translocation (for every two electrons transferred, four hydrogen ions are translocated across the cytoplasmic membrane), and thus conserves the redox energy in a proton gradient. This chain is NADH-quinone oxidoreductase subunit D, found in Ehrlichia canis (strain Jake).